The primary structure comprises 126 residues: MSFPLWLWLALGGAVGAVCRQAAVLLLAPLVARTGFPAAVLLINVLGSFLLGLTLALTGRGVWPEAVRMTFGTGVLGAFTTFSTFSTELDGLLLRGQGGLALAYAALSVGLGLTAAVAGRVLGARL.

The next 4 membrane-spanning stretches (helical) occupy residues 7–27, 36–56, 74–94, and 98–118; these read LWLA…VLLL, FPAA…LTLA, GVLG…GLLL, and GGLA…AAVA. Na(+)-binding residues include Gly-77 and Thr-80.

Belongs to the fluoride channel Fluc/FEX (TC 1.A.43) family.

Its subcellular location is the cell membrane. It carries out the reaction fluoride(in) = fluoride(out). Na(+) is not transported, but it plays an essential structural role and its presence is essential for fluoride channel function. In terms of biological role, fluoride-specific ion channel. Important for reducing fluoride concentration in the cell, thus reducing its toxicity. The chain is Fluoride-specific ion channel FluC from Deinococcus radiodurans (strain ATCC 13939 / DSM 20539 / JCM 16871 / CCUG 27074 / LMG 4051 / NBRC 15346 / NCIMB 9279 / VKM B-1422 / R1).